An 826-amino-acid polypeptide reads, in one-letter code: Protein lozenge (826 aa).

Disordered stretches follow at residues 1-45 (MHLH…ASQT), 87-171 (PVSV…WSSS), and 214-263 (ASVG…NNNN). Positions 12-24 (PPSPSPNPTPTPS) are enriched in pro residues. A compositionally biased stretch (basic residues) spans 106-141 (SHHHHHLHHHYSPYHHAHPYHPPHPHAPHHHHHHHP). Residues 142–153 (PYPYPPAGPHPP) show a composition bias toward pro residues. Residues 156–171 (VTSSSTSPTGNGWSSS) show a composition bias toward polar residues. The Runt domain maps to 275–403 (LVQKRQQEHP…TVDGPREPRS (129 aa)). A compositionally biased stretch (low complexity) spans 774-798 (QQQQQQQQQQQQVHHPQQQQVESAG). Residues 774 to 826 (QQQQQQQQQQQQVHHPQQQQVESAGEVGGSGAGGVESAREEDVGDLSQVWRPY) form a disordered region.

As to expression, expressed in the pupal eye during programmed cell death.

The protein localises to the nucleus. Its function is as follows. Involved in prepatterning photoreceptor precursors in the developing eye; in the larval eye disk it defines a subset of cells as an equipotential group that is competent to respond to the sevenless developmental signal and another subset that confer proper photoreceptor identity by positively regulating the homeo box gene Bar. Involved in the aop/pnt dynamic in a Ras-dependent manner to regulate pros expression. Promotes apoptosis in the pupal eye by directly activating aos and klu. Also modulates hid- and rpr-mediated cell death. Regulates amos function in olfactory sensilla development. The sequence is that of Protein lozenge (lz) from Drosophila melanogaster (Fruit fly).